The following is a 385-amino-acid chain: MSWQQRIDRALDERRAAEAFRRRLPVTHGAGRWLEREGERWLNFSSNDYLGLSQHPAIIAAWQQGATRYGVGAGGSGHVSGYSEAHRALEEALADWLGYPRALLFISGFAANQALIAALAEKDDRIVADRLSHASLLEAASLSPAQLRRFTHNDPQQLAQLLAKPLAGEQLAVTEGIFSMDGDSAPLAAIHAATQAAGAVLLVDDAHGVGVIGDEGRGSCAAQAVRPELLVVTFGKAFGVSGAAVLCDEAMADYLLQFARHLIYSTAMPPAQAVALSAALRIIRSDEGQQRRDILAARIRQFREGMGEVSLGLTDSVSAIQPLIVGDNARALNLACRLRDAGCWATAIRPPTVPVGSARLRLTLTAAHHTEDINRLLEVLHGHSE.

R21 contacts substrate. 108 to 109 (GF) contributes to the pyridoxal 5'-phosphate binding site. H133 provides a ligand contact to substrate. Pyridoxal 5'-phosphate contacts are provided by S179, H207, and T233. At K236 the chain carries N6-(pyridoxal phosphate)lysine. T352 provides a ligand contact to substrate.

It belongs to the class-II pyridoxal-phosphate-dependent aminotransferase family. BioF subfamily. Homodimer. It depends on pyridoxal 5'-phosphate as a cofactor.

It carries out the reaction 6-carboxyhexanoyl-[ACP] + L-alanine + H(+) = (8S)-8-amino-7-oxononanoate + holo-[ACP] + CO2. The protein operates within cofactor biosynthesis; biotin biosynthesis. Catalyzes the decarboxylative condensation of pimeloyl-[acyl-carrier protein] and L-alanine to produce 8-amino-7-oxononanoate (AON), [acyl-carrier protein], and carbon dioxide. This chain is 8-amino-7-oxononanoate synthase, found in Klebsiella pneumoniae subsp. pneumoniae (strain ATCC 700721 / MGH 78578).